Here is a 266-residue protein sequence, read N- to C-terminus: Proteasome subunit alpha type-1 (266 aa).

The tract at residues Asp-235–Glu-266 is disordered. The span at Asp-249 to Glu-266 shows a compositional bias: acidic residues.

This sequence belongs to the peptidase T1A family. As to quaternary structure, the 26S proteasome consists of a 20S proteasome core and two 19S regulatory subunits. The 20S proteasome core is composed of 28 subunits that are arranged in four stacked rings, resulting in a barrel-shaped structure. The two end rings are each formed by seven alpha subunits, and the two central rings are each formed by seven beta subunits. The catalytic chamber with the active sites is on the inside of the barrel.

It localises to the cytoplasm. The protein resides in the nucleus. The proteasome is a multicatalytic proteinase complex which is characterized by its ability to cleave peptides with Arg, Phe, Tyr, Leu, and Glu adjacent to the leaving group at neutral or slightly basic pH. The proteasome has an ATP-dependent proteolytic activity. The sequence is that of Proteasome subunit alpha type-1 from Trypanosoma brucei rhodesiense.